The chain runs to 171 residues: Lipoprotein signal peptidase (171 aa).

A run of 4 helical transmembrane segments spans residues 15-35 (WLWL…IVMD), 47-67 (VLPF…SFLS), 72-92 (WQRW…AYWM), and 107-127 (ALII…GFVV). Residues Asp-128 and Asp-146 contribute to the active site. Residues 141–161 (AFNLADSTICIGAAMIILDGF) form a helical membrane-spanning segment.

It belongs to the peptidase A8 family.

It is found in the cell inner membrane. The catalysed reaction is Release of signal peptides from bacterial membrane prolipoproteins. Hydrolyzes -Xaa-Yaa-Zaa-|-(S,diacylglyceryl)Cys-, in which Xaa is hydrophobic (preferably Leu), and Yaa (Ala or Ser) and Zaa (Gly or Ala) have small, neutral side chains.. Its pathway is protein modification; lipoprotein biosynthesis (signal peptide cleavage). In terms of biological role, this protein specifically catalyzes the removal of signal peptides from prolipoproteins. The chain is Lipoprotein signal peptidase from Vibrio cholerae serotype O1 (strain ATCC 39541 / Classical Ogawa 395 / O395).